Reading from the N-terminus, the 432-residue chain is Repulsive guidance molecule A (432 aa).

The N-terminal stretch at 1–29 (MGRGAGSTALGLFQILPVFLCIFPPVTSP) is a signal peptide. A propeptide spans 30-149 (CKILKCNSEF…NYTHCGLFGD (120 aa)) (removed in mature form). An N-linked (GlcNAc...) asparagine glycan is attached at asparagine 96. The interval 99–122 (KDGPTSQPRLRTLPPGDSQERSDS) is disordered. 2 disulfide bridges follow: cysteine 126–cysteine 207 and cysteine 144–cysteine 296. N-linked (GlcNAc...) asparagine glycosylation occurs at asparagine 140. Asparagine 404 is lipidated: GPI-anchor amidated asparagine. Residues 405-432 (AAPSEHPWALPALWVALLSLSQCWLGLL) constitute a propeptide, removed in mature form.

The protein belongs to the repulsive guidance molecule (RGM) family. In terms of processing, autocatalytically cleaved at low pH; the two chains remain linked via two disulfide bonds.

The protein resides in the cell membrane. Its function is as follows. Acts as an axon-specific repulsive guidance molecule in the retinotectal system. Repulsive for a subset of axons of the temporal half of the retina. Provides thus positional information for the temporal axons invading the optic tectum in the stratum opticum. The chain is Repulsive guidance molecule A (RGMA) from Gallus gallus (Chicken).